The sequence spans 2197 residues: uncharacterized protein (2197 aa).

Serine 2 carries the N-acetylserine modification. One copy of the HEAT repeat lies at 2159 to 2195; the sequence is TIPFLAELLEDVELSVKSLAQDIIKQMEEMSGESLAE.

Belongs to the HEATR1/UTP10 family.

It is found in the nucleus. Its subcellular location is the nucleolus. In terms of biological role, involved in nucleolar processing of pre-18S ribosomal RNA. Involved in ribosome biosynthesis. This is an uncharacterized protein from Arabidopsis thaliana (Mouse-ear cress).